A 158-amino-acid chain; its full sequence is GTP-dependent dephospho-CoA kinase (158 aa).

Asp-35, Val-36, Asp-54, Lys-56, Glu-109, and Asp-132 together coordinate GTP.

The protein belongs to the GTP-dependent DPCK family.

The catalysed reaction is 3'-dephospho-CoA + GTP = GDP + CoA + H(+). The protein operates within cofactor biosynthesis; coenzyme A biosynthesis. Functionally, catalyzes the GTP-dependent phosphorylation of the 3'-hydroxyl group of dephosphocoenzyme A to form coenzyme A (CoA). The protein is GTP-dependent dephospho-CoA kinase of Methanococcus maripaludis (strain DSM 14266 / JCM 13030 / NBRC 101832 / S2 / LL).